The following is a 185-amino-acid chain: Ribosome-recycling factor (185 aa).

The protein belongs to the RRF family.

It is found in the cytoplasm. Functionally, responsible for the release of ribosomes from messenger RNA at the termination of protein biosynthesis. May increase the efficiency of translation by recycling ribosomes from one round of translation to another. This is Ribosome-recycling factor from Vesicomyosocius okutanii subsp. Calyptogena okutanii (strain HA).